Consider the following 433-residue polypeptide: MDTCFFCGAVDLSDTGSSSSMRYETLSAKVPSSQKTVSLVLTHLANCIQTQLDLKPGARLCPRCFQELSDYDTIMVNLMTTQKRLTTQLKGALKSEFEVPESGEDILVEEVEIPQSDVETDADAEADALFVELVKDQEESDTEIKREFVDEEEEEDDDDDDEFICEDVDVGDSEALYGKSSDGEDRPTKKRVKQECTTCGKVYNSWYQLQKHISEEHSKQPNHICPICGVIRRDEEYLELHMNLHEGKTEKQCRYCPKSFSRPVNTLRHMRMHWDKKKYQCEKCGLRFSQDNLLYNHRLRHEAEENPIICSICNVSFKSRKTFNHHTLIHKENRPRHYCSVCPKSFTERYTLKMHMKTHEGDVVYGVREEAPADEQQVVEELHVDVDESEAAVTVIMSDNDENSGFCLICNTNFENKKELEHHLQFDHDVVLK.

The ZAD domain maps to 1–90; sequence MDTCFFCGAV…TQKRLTTQLK (90 aa). Residues C4, C7, C61, and C64 each coordinate Zn(2+). Positions 141 to 162 are disordered; sequence DTEIKREFVDEEEEEDDDDDDE. The segment covering 149 to 162 has biased composition (acidic residues); the sequence is VDEEEEEDDDDDDE. The Nuclear localization signal signature appears at 187–193; sequence PTKKRVK. C2H2-type zinc fingers lie at residues 194 to 217, 223 to 245, 251 to 273, 279 to 301, 308 to 330, 337 to 359, and 405 to 428; these read QECTTCGKVYNSWYQLQKHISEEH, HICPICGVIRRDEEYLELHMNLH, KQCRYCPKSFSRPVNTLRHMRMH, YQCEKCGLRFSQDNLLYNHRLRH, IICSICNVSFKSRKTFNHHTLIH, HYCSVCPKSFTERYTLKMHMKTH, and GFCLICNTNFENKKELEHHLQFDH.

As to quaternary structure, homodimer (via ZAD domain) in solution. Binds DNA as a homodimer. N-terminal regions of the protein are required, in addition to the zinc fingers, for the specificity of chromatin-binding. In terms of tissue distribution, predominantly localized to the sub- and supraesophagal ganglia and the ventral nerve cord in the embryo, after dorsal closure.

The protein resides in the nucleus. In terms of biological role, transcriptional activator that controls bicoid gene expression during oogenesis. Found in transcriptionally active cells. Binds to specific sites on polytene chromosomes of third instar larvae. Binds to the consensus DNA sequence 5'-YTAGAGATGGRAA-3'. The polypeptide is Serendipity locus protein delta (Sry-delta) (Drosophila melanogaster (Fruit fly)).